The primary structure comprises 494 residues: Amidophosphoribosyltransferase (494 aa).

Positions 1 to 10 (MSNYSGLNEE) are excised as a propeptide. The Nucleophile role is filled by Cys11. In terms of domain architecture, Glutamine amidotransferase type-2 spans 11-231 (CGVFGIWNHP…AGEYVVITDE (221 aa)). Mg(2+)-binding residues include Ser294, Asp356, and Asp357.

In the C-terminal section; belongs to the purine/pyrimidine phosphoribosyltransferase family. The cofactor is Mg(2+).

The enzyme catalyses 5-phospho-beta-D-ribosylamine + L-glutamate + diphosphate = 5-phospho-alpha-D-ribose 1-diphosphate + L-glutamine + H2O. It functions in the pathway purine metabolism; IMP biosynthesis via de novo pathway; N(1)-(5-phospho-D-ribosyl)glycinamide from 5-phospho-alpha-D-ribose 1-diphosphate: step 1/2. In terms of biological role, catalyzes the formation of phosphoribosylamine from phosphoribosylpyrophosphate (PRPP) and glutamine. The polypeptide is Amidophosphoribosyltransferase (Staphylococcus epidermidis (strain ATCC 35984 / DSM 28319 / BCRC 17069 / CCUG 31568 / BM 3577 / RP62A)).